Consider the following 484-residue polypeptide: Sushi domain-containing protein 4 (484 aa).

The signal sequence occupies residues 1-35 (MFHHADKGGKKSAFGHPVCGQIILSIILLRPPLLV). Sushi domains are found at residues 46 to 110 (QICK…VCLS), 111 to 168 (EDCL…QPTC), 169 to 230 (QGCL…RCLD), and 232 to 295 (EACS…YCVK). 8 disulfides stabilise this stretch: Cys-48–Cys-90, Cys-76–Cys-108, Cys-113–Cys-156, Cys-138–Cys-168, Cys-171–Cys-215, Cys-201–Cys-228, Cys-234–Cys-280, and Cys-265–Cys-293. 2 N-linked (GlcNAc...) asparagine glycosylation sites follow: Asn-95 and Asn-125. Asn-183 carries an N-linked (GlcNAc...) asparagine glycan. Residues 311–331 (WKVVACTATSVLLALLLVITA) form a helical membrane-spanning segment. The segment at 374 to 484 (SGNYCQPPND…PLVEDGEEDC (111 aa)) is disordered. Composition is skewed to polar residues over residues 424–442 (DSLS…SSSH) and 449–467 (SEKT…TSPS). Residues 470–484 (IADEIPLVEDGEEDC) show a composition bias toward acidic residues.

It localises to the membrane. This is Sushi domain-containing protein 4 (susd4) from Danio rerio (Zebrafish).